The following is a 142-amino-acid chain: Peptide methionine sulfoxide reductase MsrB (142 aa).

A MsrB domain is found at 2 to 125; it reads LKKDKSELTD…NSAAIQFIPY (124 aa). Cys-114 (nucleophile) is an active-site residue.

Belongs to the MsrB Met sulfoxide reductase family.

The enzyme catalyses L-methionyl-[protein] + [thioredoxin]-disulfide + H2O = L-methionyl-(R)-S-oxide-[protein] + [thioredoxin]-dithiol. This Staphylococcus aureus (strain bovine RF122 / ET3-1) protein is Peptide methionine sulfoxide reductase MsrB.